Consider the following 226-residue polypeptide: Urease accessory protein UreF (226 aa).

The protein belongs to the UreF family. As to quaternary structure, ureD, UreF and UreG form a complex that acts as a GTP-hydrolysis-dependent molecular chaperone, activating the urease apoprotein by helping to assemble the nickel containing metallocenter of UreC. The UreE protein probably delivers the nickel.

The protein localises to the cytoplasm. In terms of biological role, required for maturation of urease via the functional incorporation of the urease nickel metallocenter. This chain is Urease accessory protein UreF, found in Burkholderia multivorans (strain ATCC 17616 / 249).